Reading from the N-terminus, the 350-residue chain is Holliday junction branch migration complex subunit RuvB (350 aa).

Residues 1 to 22 (MDHTASLSPVRPEAQPTDDRER) are disordered. Residues 1–185 (MDHTASLSPV…FGIVERFEFY (185 aa)) are large ATPase domain (RuvB-L). Residues L24, R25, G66, K69, T70, T71, 132-134 (EDY), R175, Y185, and R222 each bind ATP. T70 contributes to the Mg(2+) binding site. The tract at residues 186 to 256 (TPEELAAIVQ…IVRAGLAHLK (71 aa)) is small ATPAse domain (RuvB-S). The tract at residues 259–350 (ELGLELHDIQ…PHSPEQGTLL (92 aa)) is head domain (RuvB-H). 2 residues coordinate DNA: R314 and R319.

It belongs to the RuvB family. In terms of assembly, homohexamer. Forms an RuvA(8)-RuvB(12)-Holliday junction (HJ) complex. HJ DNA is sandwiched between 2 RuvA tetramers; dsDNA enters through RuvA and exits via RuvB. An RuvB hexamer assembles on each DNA strand where it exits the tetramer. Each RuvB hexamer is contacted by two RuvA subunits (via domain III) on 2 adjacent RuvB subunits; this complex drives branch migration. In the full resolvosome a probable DNA-RuvA(4)-RuvB(12)-RuvC(2) complex forms which resolves the HJ.

The protein localises to the cytoplasm. It catalyses the reaction ATP + H2O = ADP + phosphate + H(+). In terms of biological role, the RuvA-RuvB-RuvC complex processes Holliday junction (HJ) DNA during genetic recombination and DNA repair, while the RuvA-RuvB complex plays an important role in the rescue of blocked DNA replication forks via replication fork reversal (RFR). RuvA specifically binds to HJ cruciform DNA, conferring on it an open structure. The RuvB hexamer acts as an ATP-dependent pump, pulling dsDNA into and through the RuvAB complex. RuvB forms 2 homohexamers on either side of HJ DNA bound by 1 or 2 RuvA tetramers; 4 subunits per hexamer contact DNA at a time. Coordinated motions by a converter formed by DNA-disengaged RuvB subunits stimulates ATP hydrolysis and nucleotide exchange. Immobilization of the converter enables RuvB to convert the ATP-contained energy into a lever motion, pulling 2 nucleotides of DNA out of the RuvA tetramer per ATP hydrolyzed, thus driving DNA branch migration. The RuvB motors rotate together with the DNA substrate, which together with the progressing nucleotide cycle form the mechanistic basis for DNA recombination by continuous HJ branch migration. Branch migration allows RuvC to scan DNA until it finds its consensus sequence, where it cleaves and resolves cruciform DNA. In Treponema pallidum (strain Nichols), this protein is Holliday junction branch migration complex subunit RuvB.